Consider the following 199-residue polypeptide: Gene 66 protein (199 aa).

This chain is Gene 66 protein (66), found in Mycobacterium (Mycobacteriophage D29).